A 242-amino-acid polypeptide reads, in one-letter code: Octanoyltransferase (242 aa).

The 176-residue stretch at Ser31–Gln206 folds into the BPL/LPL catalytic domain. Residues Arg70–His77, Ser137–Gly139, and Gly150–Ala152 each bind substrate. The active-site Acyl-thioester intermediate is Cys168.

Belongs to the LipB family.

The protein localises to the cytoplasm. It carries out the reaction octanoyl-[ACP] + L-lysyl-[protein] = N(6)-octanoyl-L-lysyl-[protein] + holo-[ACP] + H(+). The protein operates within protein modification; protein lipoylation via endogenous pathway; protein N(6)-(lipoyl)lysine from octanoyl-[acyl-carrier-protein]: step 1/2. Catalyzes the transfer of endogenously produced octanoic acid from octanoyl-acyl-carrier-protein onto the lipoyl domains of lipoate-dependent enzymes. Lipoyl-ACP can also act as a substrate although octanoyl-ACP is likely to be the physiological substrate. The polypeptide is Octanoyltransferase (Coxiella burnetii (strain Dugway 5J108-111)).